Consider the following 383-residue polypeptide: MSSRPLTIGLVAGETSGDILGAGLIRALKEKVPGARFVGVAGPRMQAEGCEAWYEMEELAVMGIVEVLGRLPRLLKIRRDLTQRFSELQPDVFVGIDAPDFNITLEGNLKQHGINTIHYVSPSVWAWRQKRVFKIGKATNLVLAFLPFEKAFYDRFNVPCRFIGHTMADAMPLHPDKMTARATLGIAPDAHCLALLPGSRGAEVEMLSADFLNTAVLLRQHFPDLEIVVPLVNSKRREQFERIKSSVAPDLRVHLLDGQAREAMIASDAALLASGTAALECMLAKCPMVVGYRMKPFTFWLAQRLVKTPWVSLPNLLAGRELVTELLQTDCTPDKLAAALLPLFADTDKMAELRTTFVDLHQQIRCNADEQAAQAVLELVTPR.

This sequence belongs to the LpxB family.

The enzyme catalyses 2-N,3-O-bis[(3R)-3-hydroxytetradecanoyl]-alpha-D-glucosaminyl 1-phosphate + UDP-2-N,3-O-bis[(3R)-3-hydroxytetradecanoyl]-alpha-D-glucosamine = lipid A disaccharide (E. coli) + UDP + H(+). It carries out the reaction a lipid X + a UDP-2-N,3-O-bis[(3R)-3-hydroxyacyl]-alpha-D-glucosamine = a lipid A disaccharide + UDP + H(+). It functions in the pathway glycolipid biosynthesis; lipid IV(A) biosynthesis; lipid IV(A) from (3R)-3-hydroxytetradecanoyl-[acyl-carrier-protein] and UDP-N-acetyl-alpha-D-glucosamine: step 5/6. In terms of biological role, condensation of UDP-2,3-diacylglucosamine and 2,3-diacylglucosamine-1-phosphate to form lipid A disaccharide, a precursor of lipid A, a phosphorylated glycolipid that anchors the lipopolysaccharide to the outer membrane of the cell. The polypeptide is Lipid-A-disaccharide synthase (Pectobacterium atrosepticum (strain SCRI 1043 / ATCC BAA-672) (Erwinia carotovora subsp. atroseptica)).